A 1727-amino-acid chain; its full sequence is Nucleoporin alm1 (1727 aa).

7 coiled-coil regions span residues 57–361 (QEVN…KNTS), 443–463 (NFLS…QAEL), 542–740 (IKEA…AEEL), 804–1106 (AARK…INES), 1223–1427 (GERS…QLNK), 1497–1555 (NEEE…AESA), and 1601–1664 (QKEW…KKDS). Over residues 1423-1448 (EQLNKPSATPTATTQSEPSTVSLEEF) the composition is skewed to polar residues. Disordered regions lie at residues 1423–1459 (EQLN…SSTQ), 1477–1500 (EKVR…NEEE), and 1656–1727 (LEQS…KKAK). Polar residues-rich tracts occupy residues 1672-1684 (ASKN…SNSE) and 1702-1714 (VDTN…SSSD). A Phosphoserine modification is found at Ser-1706.

The protein resides in the nucleus. It localises to the nuclear pore complex. It is found in the nucleus envelope. In terms of biological role, maintains the proteasome and its anchor cut8 at the nucleus envelope and is required for kinetochore component proteostasis. Proper kinetochore stoichiometry ensures the correct attachment of kinetochores to spindle microtubules during cytokinesis. Required for the localization of spindle assembly checkpoint (SAC) protein mad2 and bub1 to the nucleus envelope during interphase, but not their localization during mitosis. The protein is Nucleoporin alm1 of Schizosaccharomyces pombe (strain 972 / ATCC 24843) (Fission yeast).